A 616-amino-acid polypeptide reads, in one-letter code: Putative L-type lectin-domain containing receptor kinase I.10 (616 aa).

Positions 1–22 (MAWGLFQILMISFFHLIKLSSQ) are cleaved as a signal peptide. Topologically, residues 23-288 (QETSFVYETF…RAEHKNLSPL (266 aa)) are extracellular. Positions 24–258 (ETSFVYETFR…YQYVLSWSFS (235 aa)) are legume-lectin like. N-linked (GlcNAc...) asparagine glycans are attached at residues N56, N124, N181, N204, and N225. Residues 289 to 309 (FIDLLGFLAIMGLCTLTGMYF) traverse the membrane as a helical segment. The Cytoplasmic portion of the chain corresponds to 310–616 (FKRGKYAEIT…SAASSATNSP (307 aa)). One can recognise a Protein kinase domain in the interval 343-616 (FHKDGFLGKG…SAASSATNSP (274 aa)). ATP contacts are provided by residues 349–357 (LGKGGFGEV) and K371. D467 (proton acceptor) is an active-site residue.

In the C-terminal section; belongs to the protein kinase superfamily. Ser/Thr protein kinase family. This sequence in the N-terminal section; belongs to the leguminous lectin family.

The protein localises to the cell membrane. The enzyme catalyses L-seryl-[protein] + ATP = O-phospho-L-seryl-[protein] + ADP + H(+). It catalyses the reaction L-threonyl-[protein] + ATP = O-phospho-L-threonyl-[protein] + ADP + H(+). The chain is Putative L-type lectin-domain containing receptor kinase I.10 (LECRK110) from Arabidopsis thaliana (Mouse-ear cress).